A 245-amino-acid chain; its full sequence is MLIILVMFLLGIILGFIGAGGAGFVIALLTLLFHIPIHTALGTSLAGMAFTSLSGAYSHYREGNIQMKIGLIVGGFAAVGSFFGAKLTSFIPADLLHYLTAGMLFLSAILILIRLFILKEKAQVNQSTLSTYTRAVILGIAAGVLSGTFGIGSAPFIQIGLMIMLNLSIRHSVGTTMLVIIPLAVGGGIGYITEGFVDYVLLVKVLVGTMCGAYVGAKFTNLMPKVVLKSAIFLTPAIAGLLLLF.

8 consecutive transmembrane segments (helical) span residues 1-21 (MLII…GAGG), 34-56 (HIPI…LSGA), 71-91 (LIVG…TSFI), 98-118 (YLTA…LFIL), 137-157 (ILGI…APFI), 177-197 (MLVI…EGFV), 199-219 (YVLL…GAKF), and 225-245 (KVVL…LLLF).

This sequence belongs to the 4-toluene sulfonate uptake permease (TSUP) (TC 2.A.102) family.

It localises to the cell membrane. This is Probable membrane transporter protein YdhB (ydhB) from Bacillus subtilis (strain 168).